Here is a 498-residue protein sequence, read N- to C-terminus: ATP synthase subunit beta, chloroplastic (498 aa).

ATP is bound at residue 172–179 (GGAGVGKT).

It belongs to the ATPase alpha/beta chains family. F-type ATPases have 2 components, CF(1) - the catalytic core - and CF(0) - the membrane proton channel. CF(1) has five subunits: alpha(3), beta(3), gamma(1), delta(1), epsilon(1). CF(0) has four main subunits: a(1), b(1), b'(1) and c(9-12).

The protein resides in the plastid. It localises to the chloroplast thylakoid membrane. It catalyses the reaction ATP + H2O + 4 H(+)(in) = ADP + phosphate + 5 H(+)(out). Its function is as follows. Produces ATP from ADP in the presence of a proton gradient across the membrane. The catalytic sites are hosted primarily by the beta subunits. The protein is ATP synthase subunit beta, chloroplastic of Solanum bulbocastanum (Wild potato).